A 301-amino-acid polypeptide reads, in one-letter code: Putative S-adenosyl-L-methionine-dependent methyltransferase MMAR_4850 (301 aa).

Residues Asp-127 and 156–157 (DL) contribute to the S-adenosyl-L-methionine site.

Belongs to the UPF0677 family.

Functionally, exhibits S-adenosyl-L-methionine-dependent methyltransferase activity. The sequence is that of Putative S-adenosyl-L-methionine-dependent methyltransferase MMAR_4850 from Mycobacterium marinum (strain ATCC BAA-535 / M).